A 282-amino-acid chain; its full sequence is Bicarbonate transport ATP-binding protein CmpD (282 aa).

The 234-residue stretch at Leu24 to Glu257 folds into the ABC transporter domain. Position 60–67 (Gly60–Ser67) interacts with ATP.

Belongs to the ABC transporter superfamily. Nitrate/nitrite/cyanate uptake transporter (NitT) (TC 3.A.1.16) family. The complex is composed of two ATP-binding proteins (CmpC and CmpD), a transmembrane protein (CmpB) and a solute-binding protein (CmpA).

The protein resides in the cell inner membrane. Functionally, part of the ABC transporter complex CmpABCD involved in bicarbonate transport. Responsible for energy coupling to the transport system. The protein is Bicarbonate transport ATP-binding protein CmpD (cmpD) of Synechocystis sp. (strain ATCC 27184 / PCC 6803 / Kazusa).